Consider the following 503-residue polypeptide: Maturase K (503 aa).

Belongs to the intron maturase 2 family. MatK subfamily.

It is found in the plastid. It localises to the chloroplast. Its function is as follows. Usually encoded in the trnK tRNA gene intron. Probably assists in splicing its own and other chloroplast group II introns. The chain is Maturase K from Backhousia subargentea (Giant ironwood).